The primary structure comprises 421 residues: WD repeat and SOCS box-containing protein 1 (421 aa).

WD repeat units lie at residues 32–71 (KCGR…QNFL), 124–165 (SRCV…LLLN), 168–208 (DHTE…NMMK), 212–251 (GHQN…MIRK), 254–293 (GHHH…ILME), and 309–346 (ANDR…DYPV). Residues 372-421 (DGSVYFWATPRQVPSLQHLCRMSIRRVMPTQEVQELPIPSKLLEFLSYRI) form the SOCS box domain.

As to quaternary structure, interacts with DIO2. Component of the probable ECS(WSB1) E3 ubiquitin ligase complex which contains CUL5, RNF7/RBX2, Elongin BC complex and WSB1. Component of a probable ECS-like E3 ubiquitin-protein ligase complex which contains CUL5, RBX1, Elongin BC complex and WSB1. Interacts with CUL5, RNF7, ELOB and ELOC. Binds to HIPK2 through WD40 repeats.

It participates in protein modification; protein ubiquitination. Probable substrate-recognition component of a SCF-like ECS (Elongin-Cullin-SOCS-box protein) E3 ubiquitin ligase complex which mediates the ubiquitination and subsequent proteasomal degradation of target proteins. Recognizes type II iodothyronine deiodinase/DIO2. Confers constitutive instability to HIPK2 through proteasomal degradation. This Homo sapiens (Human) protein is WD repeat and SOCS box-containing protein 1 (WSB1).